The following is a 639-amino-acid chain: DNA mismatch repair protein MutL (639 aa).

Residues 336 to 392 are disordered; it reads SAHDDPTPAISGAARDEEPRGVENRASAGENRFNRPASSPVASAPRPAHVAAPRMPA. The segment covering 349 to 358 has biased composition (basic and acidic residues); sequence ARDEEPRGVE. A compositionally biased stretch (low complexity) spans 370–392; it reads RPASSPVASAPRPAHVAAPRMPA.

The protein belongs to the DNA mismatch repair MutL/HexB family.

Functionally, this protein is involved in the repair of mismatches in DNA. It is required for dam-dependent methyl-directed DNA mismatch repair. May act as a 'molecular matchmaker', a protein that promotes the formation of a stable complex between two or more DNA-binding proteins in an ATP-dependent manner without itself being part of a final effector complex. This chain is DNA mismatch repair protein MutL, found in Edwardsiella ictaluri (strain 93-146).